The chain runs to 206 residues: Large ribosomal subunit protein uL4 (206 aa).

Positions 63-97 (MYKQKGTGRARHHSARAPQFRGGGKAHGPVVRSHE) are disordered. Residues 64-77 (YKQKGTGRARHHSA) are compositionally biased toward basic residues.

Belongs to the universal ribosomal protein uL4 family. As to quaternary structure, part of the 50S ribosomal subunit.

One of the primary rRNA binding proteins, this protein initially binds near the 5'-end of the 23S rRNA. It is important during the early stages of 50S assembly. It makes multiple contacts with different domains of the 23S rRNA in the assembled 50S subunit and ribosome. In terms of biological role, forms part of the polypeptide exit tunnel. This is Large ribosomal subunit protein uL4 from Rhizobium rhizogenes (strain K84 / ATCC BAA-868) (Agrobacterium radiobacter).